A 255-amino-acid polypeptide reads, in one-letter code: Complement C1q-like protein 3 (255 aa).

The signal sequence occupies residues Met-1–Ala-20. Residues Lys-39–Gly-109 form a disordered region. The region spanning Gly-61–Asn-111 is the Collagen-like domain. Residues Arg-75–Pro-89 are compositionally biased toward pro residues. Residues Ser-122–Asp-255 enclose the C1q domain.

As to quaternary structure, forms homooligomers. Interacts with ADGRB3. Interacts with C1QL2 and C1QL4, when proteins are coexpressed; this interaction does not occur after secretion. As to expression, highly expressed in adipose tissue, with expression levels at least 2 orders of magnitude higher than in other tissues, including brain and kidney.

It is found in the secreted. Functionally, may regulate the number of excitatory synapses that are formed on hippocampus neurons. Has no effect on inhibitory synapses. Plays a role in glucose homeostasis. Via AMPK signaling pathway, stimulates glucose uptake in adipocytes, myotubes and hepatocytes and enhances insulin-stimulated glucose uptake. In a hepatoma cell line, reduces the expression of gluconeogenic enzymes G6PC1 and PCK1 and hence decreases de novo glucose production. This chain is Complement C1q-like protein 3 (C1QL3), found in Homo sapiens (Human).